Reading from the N-terminus, the 1933-residue chain is WD repeat-containing protein 81 (1933 aa).

Residues 1 to 643 (MAQGSRRRKV…TPCESGWTRE (643 aa)) are necessary and sufficient for the interaction with SQSTM1. Disordered regions lie at residues 305 to 334 (PSED…RPGC), 663 to 714 (SIPG…GKIV), 1038 to 1057 (CAFG…SGLG), 1090 to 1209 (QPQE…EGKE), 1517 to 1544 (SLRN…SCLQ), and 1565 to 1590 (DSQP…SRNE). Residues 314-330 (SEEKDRTGVKSEKDGEG) show a composition bias toward basic and acidic residues. Residues 333–610 (GCPTCQKELR…IPRLLVQPIQ (278 aa)) enclose the BEACH domain. A compositionally biased stretch (low complexity) spans 668–693 (AGDQPGSSSSQASPGLLPFSAPSGSR). Composition is skewed to polar residues over residues 1100–1112 (GQLS…SEAS) and 1131–1140 (VKSGDSSQDL). Residues 1145–1166 (GSEEEEEEEEGCVVLEEEEQDE) are compositionally biased toward acidic residues. 5 WD repeats span residues 1638–1677 (GHTG…DGTS), 1684–1724 (IYAQ…TLRT), 1776–1815 (LNPG…VLRG), 1818–1856 (AHEG…PTHH), and 1903–1933 (NFRG…RLLA).

This sequence belongs to the WD repeat WDR81 family. Interacts with WDR91; involved in early to late endosome cargo transport. Interacts with BECN1; negatively regulates the PI3 kinase/PI3K activity associated with endosomal membranes. Interacts with SQSTM1; the interaction is direct and regulates the interaction of SQSTM1 with ubiquitinated proteins. Interacts with MAP1LC3C; recruits MAP1LC3C to ubiquitinated protein aggregates in the aggrephagy process.

It is found in the early endosome membrane. The protein resides in the late endosome membrane. It localises to the lysosome membrane. Its subcellular location is the cytoplasmic vesicle. The protein localises to the autophagosome membrane. It is found in the mitochondrion. The protein resides in the cytoplasm. It localises to the cytosol. Functionally, functions as a negative regulator of the PI3 kinase/PI3K activity associated with endosomal membranes via BECN1, a core subunit of the PI3K complex. By modifying the phosphatidylinositol 3-phosphate/PtdInsP3 content of endosomal membranes may regulate endosome fusion, recycling, sorting and early to late endosome transport. It is for instance, required for the delivery of cargos like BST2/tetherin from early to late endosome and thereby participates indirectly to their degradation by the lysosome. May also play a role in aggrephagy, the macroautophagic degradation of ubiquitinated protein aggregates. In this process, may regulate the interaction of SQSTM1 with ubiquitinated proteins and also recruit MAP1LC3C. May also be involved in maintenance of normal mitochondrial structure and organization. The protein is WD repeat-containing protein 81 of Rattus norvegicus (Rat).